A 456-amino-acid chain; its full sequence is RUN domain-containing protein 3B (456 aa).

The disordered stretch occupies residues 1 to 24 (MASRSLGGLSGIRGGGGGGGKKSL). Residues 8–21 (GLSGIRGGGGGGGK) are compositionally biased toward gly residues. R13 carries the omega-N-methylarginine modification. The RUN domain occupies 57-189 (DDSSPEFNNF…IDFSFCLKGE (133 aa)). Residues S215 and S216 each carry the phosphoserine modification. The segment at 216-237 (SDEEELRTLGSSGSESSTPENV) is disordered. The segment covering 224–235 (LGSSGSESSTPE) has biased composition (polar residues). Residues 300–325 (AHKLEKEQLEYIIVELQDQLTVLKNN) are a coiled coil. Residues 382–405 (SLSQTSLDPGQSQEGDGKQDTLNV) show a composition bias toward polar residues. The interval 382 to 411 (SLSQTSLDPGQSQEGDGKQDTLNVMSEGKE) is disordered.

Belongs to the RUNDC3 family. As to quaternary structure, interacts with RAP2A.

This is RUN domain-containing protein 3B (RUNDC3B) from Pongo abelii (Sumatran orangutan).